We begin with the raw amino-acid sequence, 241 residues long: Core protein D3 homolog (241 aa).

The protein belongs to the chordopoxvirinae D3 family.

Its subcellular location is the virion. Functionally, late protein which is part of a large complex required for early virion morphogenesis. This complex participates in the formation of virosomes and the incorporation of virosomal contents into nascent immature virions. This Oryctolagus cuniculus (Rabbit) protein is Core protein D3 homolog.